The sequence spans 298 residues: Protoheme IX farnesyltransferase (298 aa).

The next 9 membrane-spanning stretches (helical) occupy residues 23-43, 47-67, 93-113, 115-135, 143-163, 169-189, 211-231, 236-256, and 278-298; these read LLLL…GKPY, LVVL…NMYF, VFIA…RIIN, HFAL…TYLL, IIAG…AAAG, ALLF…FLAT, IAVA…IVGL, VIGT…FHLA, and MMLG…YIIS.

Belongs to the UbiA prenyltransferase family. Protoheme IX farnesyltransferase subfamily.

The protein localises to the cell membrane. It catalyses the reaction heme b + (2E,6E)-farnesyl diphosphate + H2O = Fe(II)-heme o + diphosphate. It functions in the pathway porphyrin-containing compound metabolism; heme O biosynthesis; heme O from protoheme: step 1/1. Functionally, converts heme B (protoheme IX) to heme O by substitution of the vinyl group on carbon 2 of heme B porphyrin ring with a hydroxyethyl farnesyl side group. The sequence is that of Protoheme IX farnesyltransferase from Hyperthermus butylicus (strain DSM 5456 / JCM 9403 / PLM1-5).